The primary structure comprises 87 residues: Small ribosomal subunit protein uS17 (87 aa).

This sequence belongs to the universal ribosomal protein uS17 family. In terms of assembly, part of the 30S ribosomal subunit.

One of the primary rRNA binding proteins, it binds specifically to the 5'-end of 16S ribosomal RNA. This Pelotomaculum thermopropionicum (strain DSM 13744 / JCM 10971 / SI) protein is Small ribosomal subunit protein uS17.